Here is a 207-residue protein sequence, read N- to C-terminus: Dephospho-CoA kinase (207 aa).

Residues 8–207 (AIALTGSIGS…LPCVDCVQSS (200 aa)) enclose the DPCK domain. ATP is bound at residue 16 to 21 (GSGKST).

This sequence belongs to the CoaE family.

It is found in the cytoplasm. The enzyme catalyses 3'-dephospho-CoA + ATP = ADP + CoA + H(+). It functions in the pathway cofactor biosynthesis; coenzyme A biosynthesis; CoA from (R)-pantothenate: step 5/5. Its function is as follows. Catalyzes the phosphorylation of the 3'-hydroxyl group of dephosphocoenzyme A to form coenzyme A. In Helicobacter hepaticus (strain ATCC 51449 / 3B1), this protein is Dephospho-CoA kinase.